A 446-amino-acid chain; its full sequence is Tubulin beta chain (446 aa).

Residues Gln11, Glu69, Ser138, Gly142, Thr143, Gly144, Asn204, and Asn226 each contribute to the GTP site. Glu69 contacts Mg(2+). The segment at 425–446 (YQEASISEGEEEYPEEVSNEEE) is disordered. Residues 432-446 (EGEEEYPEEVSNEEE) show a composition bias toward acidic residues.

The protein belongs to the tubulin family. Dimer of alpha and beta chains. A typical microtubule is a hollow water-filled tube with an outer diameter of 25 nm and an inner diameter of 15 nM. Alpha-beta heterodimers associate head-to-tail to form protofilaments running lengthwise along the microtubule wall with the beta-tubulin subunit facing the microtubule plus end conferring a structural polarity. Microtubules usually have 13 protofilaments but different protofilament numbers can be found in some organisms and specialized cells. The cofactor is Mg(2+).

The protein resides in the cytoplasm. It is found in the cytoskeleton. Functionally, tubulin is the major constituent of microtubules, a cylinder consisting of laterally associated linear protofilaments composed of alpha- and beta-tubulin heterodimers. Microtubules grow by the addition of GTP-tubulin dimers to the microtubule end, where a stabilizing cap forms. Below the cap, tubulin dimers are in GDP-bound state, owing to GTPase activity of alpha-tubulin. The protein is Tubulin beta chain (TUB2) of Blumeria hordei (Barley powdery mildew).